The chain runs to 267 residues: Undecaprenyl-diphosphatase (267 aa).

7 helical membrane passes run 1–21 (MSLF…FLPV), 40–60 (GQVI…LYFW), 85–105 (LAMG…ALHF), 111–131 (ALRS…LLWW), 190–210 (MLMS…DVAV), 219–239 (DGAI…SLMM), and 245–265 (VSFT…LGIA).

The protein belongs to the UppP family.

It localises to the cell inner membrane. The catalysed reaction is di-trans,octa-cis-undecaprenyl diphosphate + H2O = di-trans,octa-cis-undecaprenyl phosphate + phosphate + H(+). Functionally, catalyzes the dephosphorylation of undecaprenyl diphosphate (UPP). Confers resistance to bacitracin. The protein is Undecaprenyl-diphosphatase of Ruegeria pomeroyi (strain ATCC 700808 / DSM 15171 / DSS-3) (Silicibacter pomeroyi).